A 174-amino-acid polypeptide reads, in one-letter code: FMN reductase (NADH) SmoA (174 aa).

It belongs to the non-flavoprotein flavin reductase family.

It carries out the reaction FMNH2 + NAD(+) = FMN + NADH + 2 H(+). Part of the sulfoquinovose monooxygenase (sulfo-SMO) pathway, a D-sulfoquinovose degradation pathway that enables the complete utilization of all carbons within sulfoquinovose (SQ) with concomitant production of inorganic sulfite. Catalyzes the NADH-dependent reduction of FMN. FMNH(2) is then transferred to the sulfoquinovose monooxygenase SmoC. The polypeptide is FMN reductase (NADH) SmoA (Agrobacterium fabrum (strain C58 / ATCC 33970) (Agrobacterium tumefaciens (strain C58))).